The primary structure comprises 305 residues: Transcription factor MYB87 (305 aa).

HTH myb-type domains lie at 9–66 (KMAV…RPNL) and 67–117 (KHGG…KKKL). DNA-binding regions (H-T-H motif) lie at residues 38–62 (WISL…LNYL) and 90–113 (WSII…NTRL).

As to expression, expressed in roots, leaves, internodes, shoot tips and flowers.

It localises to the nucleus. Transcription factor that functions as a regulator of genes affecting cell wall organization and remodeling. Activates genes related to the primary cell wall and represses genes related to the secondary cell wall and expansins. Required for the regulation of longitudinal cell growth in stems, leaves, petioles, roots, flowers and siliques. The protein is Transcription factor MYB87 of Arabidopsis thaliana (Mouse-ear cress).